The sequence spans 380 residues: Cytochrome b (380 aa).

A run of 4 helical transmembrane segments spans residues 33-53 (FGSLLGLCLASQILTGLFLAM), 77-98 (WLIRNMHANGASFFFICLYLHI), 113-133 (WNVGVVLLLLVMMTAFVGYVL), and 178-198 (FFAFHFLFPFVILAAAVLHLL). Positions 83 and 97 each coordinate heme b. 2 residues coordinate heme b: H182 and H196. H201 contacts a ubiquinone. Helical transmembrane passes span 226–246 (YKDLLGFAVLLMGLTSLALFS), 288–308 (LGGVLALLASILILMVVPFLH), 320–340 (ASQFLFWTLVADVVVLTWIGG), and 347–367 (FIIIGQVASVLYFSLFLVLFP).

The protein belongs to the cytochrome b family. The cytochrome bc1 complex contains 3 respiratory subunits (MT-CYB, CYC1 and UQCRFS1), 2 core proteins (UQCRC1 and UQCRC2) and probably 6 low-molecular weight proteins. Heme b is required as a cofactor.

It localises to the mitochondrion inner membrane. Its function is as follows. Component of the ubiquinol-cytochrome c reductase complex (complex III or cytochrome b-c1 complex) that is part of the mitochondrial respiratory chain. The b-c1 complex mediates electron transfer from ubiquinol to cytochrome c. Contributes to the generation of a proton gradient across the mitochondrial membrane that is then used for ATP synthesis. This Scomber scombrus (Atlantic mackerel) protein is Cytochrome b (mt-cyb).